The chain runs to 224 residues: Polyadenylate-binding protein 2 (224 aa).

Residues 1–36 show a composition bias toward acidic residues; sequence MADEDITLNEDQLLESLEETNGEQETEIATEVEEEG. The interval 1-40 is disordered; it reads MADEDITLNEDQLLESLEETNGEQETEIATEVEEEGSMQI. Residues 9-74 adopt a coiled-coil conformation; that stretch reads NEDQLLESLE…QSEVDKQMAG (66 aa). Residues 96 to 173 enclose the RRM domain; that stretch reads RSVYVGNVDY…RQIKVMSKRT (78 aa).

Interacts with ZC3H3. In terms of tissue distribution, expressed ubiquitously in all transcriptionally active cells.

The protein localises to the nucleus. It is found in the cytoplasm. In terms of biological role, involved in the 3'-end formation of mRNA precursors (pre-mRNA) by the addition of a poly(A) tail of 200-250 nt to the upstream cleavage product. Stimulates poly(A) polymerase (PAPOLA) conferring processivity on the poly(A) tail elongation reaction and also controls the poly(A) tail length. Increases the affinity of poly(A) polymerase for RNA. Binds to poly(A) and to poly(G) with high affinity. May protect the poly(A) tail from degradation. Plays a role in the positive regulation of alpha-1,3 fucosylation, possibly by cooperating with swm which regulates nuclear export of fucosyltransferase FucTA. Involved in germline stem cell transit amplification, differentiation and mitosis-to-meiosis transition. The protein is Polyadenylate-binding protein 2 of Drosophila melanogaster (Fruit fly).